A 774-amino-acid chain; its full sequence is Polyribonucleotide nucleotidyltransferase (774 aa).

D485 and D491 together coordinate Mg(2+). Positions 552–611 (PRIETMSVPKDKIRDIIGTGGKIIREIVATTGAKVDIDDDGTVKISSSDTAQIEAARNWI) constitute a KH domain. The S1 motif domain occupies 621–689 (GKIYTGKVVN…NRGKVRLSMR (69 aa)). Residues 689–774 (RVVDQETGEE…APAFLTRDDD (86 aa)) form a disordered region. The span at 700–755 (PDTRPPREERPRGDRGDRGDRGPRRDGDRRREGGDRGPRRDRGDRGDRPRRERSEG) shows a compositional bias: basic and acidic residues.

Belongs to the polyribonucleotide nucleotidyltransferase family. Requires Mg(2+) as cofactor.

The protein localises to the cytoplasm. The catalysed reaction is RNA(n+1) + phosphate = RNA(n) + a ribonucleoside 5'-diphosphate. In terms of biological role, involved in mRNA degradation. Catalyzes the phosphorolysis of single-stranded polyribonucleotides processively in the 3'- to 5'-direction. This is Polyribonucleotide nucleotidyltransferase from Rhizorhabdus wittichii (strain DSM 6014 / CCUG 31198 / JCM 15750 / NBRC 105917 / EY 4224 / RW1) (Sphingomonas wittichii).